We begin with the raw amino-acid sequence, 156 residues long: Keratin-associated protein 13-4 (156 aa).

Tandem repeats lie at residues 37–46 (CQLGSSLYRN), 47–56 (CQKTCWEPTS), 57–66 (CRKSCYRRRT), and 73–82 (CQTTCSRSLG). Positions 37 to 82 (CQLGSSLYRNCQKTCWEPTSCRKSCYRRRTSMLCSPCQTTCSRSLG) are 4 X 10 AA approximate repeats.

Belongs to the PMG family. In terms of assembly, interacts with hair keratins.

Its function is as follows. In the hair cortex, hair keratin intermediate filaments are embedded in an interfilamentous matrix, consisting of hair keratin-associated proteins (KRTAP), which are essential for the formation of a rigid and resistant hair shaft through their extensive disulfide bond cross-linking with abundant cysteine residues of hair keratins. The matrix proteins include the high-sulfur and high-glycine-tyrosine keratins. The protein is Keratin-associated protein 13-4 (KRTAP13-4) of Macaca fascicularis (Crab-eating macaque).